Reading from the N-terminus, the 695-residue chain is C6 finger domain transcription factor nscR (695 aa).

Positions 17 to 43 (CELCRERKVKCDKLDPCTNCASAGVVC) form a DNA-binding region, zn(2)-C6 fungal-type. Residues 101–113 (SMRSSASQSSNQD) show a composition bias toward low complexity. The tract at residues 101–146 (SMRSSASQSSNQDQESRDAIESISNETEDASAPTPDSSRMPLGDGG) is disordered.

It is found in the nucleus. In terms of biological role, transcription factor that specifically regulates the neosartoricin B biosynthesis gene cluster. The chain is C6 finger domain transcription factor nscR from Arthroderma otae (strain ATCC MYA-4605 / CBS 113480) (Microsporum canis).